Reading from the N-terminus, the 215-residue chain is Probable nicotinate-nucleotide adenylyltransferase (215 aa).

It belongs to the NadD family.

It carries out the reaction nicotinate beta-D-ribonucleotide + ATP + H(+) = deamido-NAD(+) + diphosphate. Its pathway is cofactor biosynthesis; NAD(+) biosynthesis; deamido-NAD(+) from nicotinate D-ribonucleotide: step 1/1. Catalyzes the reversible adenylation of nicotinate mononucleotide (NaMN) to nicotinic acid adenine dinucleotide (NaAD). The chain is Probable nicotinate-nucleotide adenylyltransferase from Shewanella putrefaciens (strain CN-32 / ATCC BAA-453).